Here is a 248-residue protein sequence, read N- to C-terminus: MIAFIEPFLASKSLANNSQQSYRYDLRQFCQQVGQRINPETLALYQQSLSGLTVAAKKRKLSTVNQFLYYLYQQRVLADYFKMDDRIEASFSLKPQLTRLDTSAFYAETAFLKGQLIALLILELGLTPSEIAGLRLADFDLGLQVLRLQSHRGIRVMTLSRTLLPFLERAAEAQQLYLFDHDAKPFSRQWFFNQLRDFLESIGCAELSAQSLREQFILNEKAAGKSIIEVAQLLGLKSPITLEKYYKM.

The 72-residue stretch at 1–72 folds into the Core-binding (CB) domain; that stretch reads MIAFIEPFLA…TVNQFLYYLY (72 aa). The 157-residue stretch at 92 to 248 folds into the Tyr recombinase domain; the sequence is SLKPQLTRLD…PITLEKYYKM (157 aa). Arg-213 is a catalytic residue. Tyr-245 serves as the catalytic O-(3'-phospho-DNA)-tyrosine intermediate.

This sequence belongs to the 'phage' integrase family. XerD-like subfamily.

The protein resides in the cytoplasm. Its function is as follows. Putative tyrosine recombinase. Not involved in the cutting and rejoining of the recombining DNA molecules on dif(SL) site. The chain is Tyrosine recombinase XerD-like from Streptococcus equi subsp. zooepidemicus (strain MGCS10565).